The following is a 66-amino-acid chain: Large ribosomal subunit protein uL29 (66 aa).

Belongs to the universal ribosomal protein uL29 family.

This is Large ribosomal subunit protein uL29 from Geobacillus thermodenitrificans (strain NG80-2).